A 263-amino-acid chain; its full sequence is Adaptin ear-binding coat-associated protein 2 (263 aa).

Disordered regions lie at residues 167-191 and 209-263; these read KKEG…LPPP and GGSL…WVQF. Phosphoserine is present on S181. 2 consecutive short sequence motifs (WXXF motif) follow at residues 218–221 and 238–241; these read GSGG and DIWG. The span at 246 to 263 shows a compositional bias: low complexity; that stretch reads STGSPSSQSQPGTGWVQF.

Belongs to the NECAP family. In terms of assembly, interacts with AP1G1 and AP2A1 components of the adapter protein complexes AP-1 and AP-2. Interacts with the GAE domain proteins GGA1, GGA2 and GGA3. Expressed in brain, heart, kidney, liver and lung (at protein level).

The protein localises to the cytoplasmic vesicle. Its subcellular location is the clathrin-coated vesicle membrane. It localises to the cell membrane. Functionally, involved in endocytosis. This is Adaptin ear-binding coat-associated protein 2 (Necap2) from Rattus norvegicus (Rat).